The sequence spans 638 residues: Signal recognition particle receptor subunit alpha (638 aa).

Disordered stretches follow at residues 132–244 and 283–316; these read APTT…GKKA and GTGS…TKGT. Basic and acidic residues-rich tracts occupy residues 137-146 and 153-165; these read KKFEDSEKAK and IETR…EKAK. Residue serine 177 is modified to Phosphoserine. Residues 204-239 are compositionally biased toward basic and acidic residues; that stretch reads LSKEELIRRKREEFIQKHGRGMEKSNKSTKSDAPKE. Residue threonine 284 is modified to Phosphothreonine. Phosphoserine occurs at positions 296, 297, and 298. Residues 304-314 show a composition bias toward polar residues; the sequence is AQNSTKPSATK. An NG domain region spans residues 419 to 636; sequence YVVTFCGVNG…NAKAVVAALM (218 aa). 425 to 432 contacts GTP; the sequence is GVNGVGKS. Phosphoserine is present on serine 473. GTP is bound at residue 520-524; sequence DTAGR. Threonine 578 is subject to Phosphothreonine. 588–591 contacts GTP; the sequence is TKFD.

Belongs to the GTP-binding SRP family. In terms of assembly, heterodimer with SRPRB. Interacts with the signal recognition particle (SRP) complex subunit SRP54. (Microbial infection) May interact with Zika virus strain Mr-766 non-structural protein 4A/NS4A. May interact with Zika virus French Polynesia 10087PF/2013 non-structural protein 4A/NS4A. As to quaternary structure, (Microbial infection) May interact with Dengue virus DENV2 16681 non-structural protein 4A/NS4A.

Its subcellular location is the endoplasmic reticulum membrane. In terms of biological role, component of the signal recognition particle (SRP) complex receptor (SR). Ensures, in conjunction with the SRP complex, the correct targeting of the nascent secretory proteins to the endoplasmic reticulum membrane system. Forms a guanosine 5'-triphosphate (GTP)-dependent complex with the SRP subunit SRP54. SRP receptor compaction and GTPase rearrangement drive SRP-mediated cotranslational protein translocation into the ER. The polypeptide is Signal recognition particle receptor subunit alpha (Homo sapiens (Human)).